A 245-amino-acid chain; its full sequence is tRNA1(Val) (adenine(37)-N6)-methyltransferase (245 aa).

It belongs to the methyltransferase superfamily. tRNA (adenine-N(6)-)-methyltransferase family.

Its subcellular location is the cytoplasm. The catalysed reaction is adenosine(37) in tRNA1(Val) + S-adenosyl-L-methionine = N(6)-methyladenosine(37) in tRNA1(Val) + S-adenosyl-L-homocysteine + H(+). Specifically methylates the adenine in position 37 of tRNA(1)(Val) (anticodon cmo5UAC). This is tRNA1(Val) (adenine(37)-N6)-methyltransferase from Escherichia coli (strain SE11).